Reading from the N-terminus, the 327-residue chain is tRNA uridine(34) hydroxylase (327 aa).

A Rhodanese domain is found at 130 to 224 (LDEDTVVLDT…YGKDPEVQGE (95 aa)). Residue cysteine 184 is the Cysteine persulfide intermediate of the active site.

Belongs to the TrhO family.

It catalyses the reaction uridine(34) in tRNA + AH2 + O2 = 5-hydroxyuridine(34) in tRNA + A + H2O. Catalyzes oxygen-dependent 5-hydroxyuridine (ho5U) modification at position 34 in tRNAs. The sequence is that of tRNA uridine(34) hydroxylase from Streptococcus thermophilus (strain CNRZ 1066).